The sequence spans 225 residues: 3-dehydroquinate dehydratase (225 aa).

3-dehydroquinate contacts are provided by residues Ser6, 30–32 (EWR), and Arg62. His118 (proton donor/acceptor) is an active-site residue. Lys143 functions as the Schiff-base intermediate with substrate in the catalytic mechanism. Positions 186, 205, and 209 each coordinate 3-dehydroquinate.

Belongs to the type-I 3-dehydroquinase family. In terms of assembly, homodimer.

It catalyses the reaction 3-dehydroquinate = 3-dehydroshikimate + H2O. Its pathway is metabolic intermediate biosynthesis; chorismate biosynthesis; chorismate from D-erythrose 4-phosphate and phosphoenolpyruvate: step 3/7. Involved in the third step of the chorismate pathway, which leads to the biosynthesis of aromatic amino acids. Catalyzes the cis-dehydration of 3-dehydroquinate (DHQ) and introduces the first double bond of the aromatic ring to yield 3-dehydroshikimate. The chain is 3-dehydroquinate dehydratase from Streptococcus pneumoniae (strain ATCC 700669 / Spain 23F-1).